The sequence spans 918 residues: Band 3 anion exchange protein (918 aa).

Positions 1–48 (MENDLSFGEDVMSYEEESDSAFPSPIRPTPPGHSGNYDLEQSRQEEDS) are disordered. At 1–392 (MENDLSFGED…ISDFTDALDP (392 aa)) the chain is on the cytoplasmic side. Residues 393 to 416 (QVLAAVIFIYFAALSPAITFGGLL) traverse the membrane as a helical segment. Residues 417 to 424 (ADKTEHMM) lie on the Extracellular side of the membrane. Residues 425-445 (GVSELMISTCVQGIIFAFIAA) form a helical membrane-spanning segment. Residues 446-448 (QPT) are Cytoplasmic-facing. Residues 449–465 (LVIGFSGPLLVFEEAFF) form a discontinuously helical membrane-spanning segment. At 466-474 (AFCKSQEIE) the chain is on the extracellular side. A helical membrane pass occupies residues 475–495 (YIVGRIWVGLWLVIIVVVIVA). Residues 496–507 (VEGSFLVKFISR) lie on the Cytoplasmic side of the membrane. A helical membrane pass occupies residues 508-530 (FTQEIFSILISLIFIYETFSKLG). At 531 to 583 (KIFKAHPLVLNYEHLNDSLDNPFHPVVKEHIEYHEDGNKTVHEVIHERAYPNT) the chain is on the extracellular side. N-linked (GlcNAc...) asparagine glycosylation is found at Asn-546 and Asn-568. A helical membrane pass occupies residues 584 to 604 (ALLSMCLMFGCFFIAYFLRQF). Over 605–615 (KNGHFLPGPIR) the chain is Cytoplasmic. Residues 616-636 (RMIGDFGVPIAIFFMIAVDIT) form a helical membrane-spanning segment. The Extracellular portion of the chain corresponds to 637 to 676 (IEDAYTQKLVVPKGLMVSNPNARGWFINPLGEKKPFPAWM). The helical transmembrane segment at 677-697 (MGACCVPALLVFILIFLESQI) threads the bilayer. The Cytoplasmic segment spans residues 698–713 (TTLIVSKPERKMVKGS). The helical transmembrane segment at 714-732 (GFHLDLLILVTMGGIASLF) threads the bilayer. The discontinuously helical transmembrane segment at 733–750 (GVPWLSAATVRSVTHANA) threads the bilayer. Topologically, residues 751–769 (LTVMSKGPKPEIEKVLEQR) are cytoplasmic. 2 consecutive transmembrane segments (helical) span residues 770-790 (ISGM…PILK) and 791-809 (MIPM…ITSL). Over 810–847 (SGIQMWDRMLLLIVPRKYYPADAYAQRVTTMKMHLFTL) the chain is Cytoplasmic. The segment at residues 848–878 (IQMVCLGALWMVKMSAFSLALPFVLILTIPL) is an intramembrane region (discontinuously helical). Residue Cys-852 is the site of S-palmitoyl cysteine attachment. The Cytoplasmic segment spans residues 879-918 (RMAITGTLFTDKEMKCLDASDGKVKFEEEPGEDMYESPLP).

Belongs to the anion exchanger (TC 2.A.31) family. A dimer in solution, it spans the membrane asymmetrically and appears to be tetrameric.

It is found in the cell membrane. It catalyses the reaction hydrogencarbonate(in) + chloride(out) = hydrogencarbonate(out) + chloride(in). Its function is as follows. Functions both as a transporter that mediates electroneutral anion exchange across the cell membrane and as a structural protein. Major integral membrane glycoprotein of the erythrocyte membrane; required for normal flexibility and stability of the erythrocyte membrane and for normal erythrocyte shape via the interactions of its cytoplasmic domain with cytoskeletal proteins, glycolytic enzymes, and hemoglobin. Functions as a transporter that mediates the 1:1 exchange of inorganic anions across the erythrocyte membrane. Mediates chloride-bicarbonate exchange in the kidney, and is required for normal acidification of the urine. In Oncorhynchus mykiss (Rainbow trout), this protein is Band 3 anion exchange protein (slc4a1).